A 355-amino-acid chain; its full sequence is Transcription factor TGAL9 (355 aa).

Disordered stretches follow at residues 83–104 (FPSQ…MAAI) and 118–188 (GSSK…DAKT). Over residues 118 to 134 (GSSKRPPAAAAAGGQPS) the composition is skewed to low complexity. Residues 135–144 (RLNNPADQPS) show a composition bias toward polar residues. 2 stretches are compositionally biased toward basic and acidic residues: residues 148–159 (KDGKAAVVKKEG) and 176–188 (SEHE…DAKT). The bZIP domain occupies 185 to 230 (DAKTLRRLAQNREAARKSRLRKKAYIQNLETSRIRLSQLEQELVQR). A basic motif region spans residues 187 to 207 (KTLRRLAQNREAARKSRLRKK). Residues 213-227 (LETSRIRLSQLEQEL) form a leucine-zipper region. In terms of domain architecture, DOG1 spans 254–355 (AAWFDGEYAR…RPSELIKVST (102 aa)).

Belongs to the bZIP family. As to quaternary structure, interacts with NPR5/NH4, NH5.1 and NH5.2.

It localises to the nucleus. Transcriptional regulator involved in defense response. This chain is Transcription factor TGAL9, found in Oryza sativa subsp. japonica (Rice).